The sequence spans 804 residues: Leucine--tRNA ligase (804 aa).

Residues 39-50 (PYPSGKGLHVGH) carry the 'HIGH' region motif. The short motif at 573–577 (KMSKS) is the 'KMSKS' region element. ATP is bound at residue Lys-576.

It belongs to the class-I aminoacyl-tRNA synthetase family.

The protein resides in the cytoplasm. It catalyses the reaction tRNA(Leu) + L-leucine + ATP = L-leucyl-tRNA(Leu) + AMP + diphosphate. This is Leucine--tRNA ligase from Lactobacillus delbrueckii subsp. bulgaricus (strain ATCC BAA-365 / Lb-18).